The following is a 232-amino-acid chain: DNA repair and recombination protein RadB (232 aa).

It belongs to the eukaryotic RecA-like protein family. RadB subfamily.

In terms of biological role, involved in DNA repair and in homologous recombination. May regulate the cleavage reactions of the branch-structured DNA. Has a very weak ATPase activity that is not stimulated by DNA. Binds DNA but does not promote DNA strands exchange. This is DNA repair and recombination protein RadB from Methanosphaera stadtmanae (strain ATCC 43021 / DSM 3091 / JCM 11832 / MCB-3).